The chain runs to 337 residues: C5a anaphylatoxin chemotactic receptor 2 (337 aa).

The Extracellular portion of the chain corresponds to methionine 1 to proline 38. An N-linked (GlcNAc...) asparagine glycan is attached at asparagine 3. A helical transmembrane segment spans residues leucine 39–glycine 61. The Cytoplasmic portion of the chain corresponds to lysine 62 to tryptophan 72. Residues leucine 73–alanine 95 form a helical membrane-spanning segment. Topologically, residues arginine 96–isoleucine 114 are extracellular. A disulfide bond links cysteine 107 and cysteine 186. The chain crosses the membrane as a helical span at residues leucine 115 to leucine 137. At glycine 138 to cysteine 149 the chain is on the cytoplasmic side. A helical membrane pass occupies residues glycine 150 to tyrosine 172. The Extracellular portion of the chain corresponds to arginine 173–alanine 202. A helical transmembrane segment spans residues isoleucine 203–cysteine 225. Topologically, residues tryptophan 226 to alanine 237 are cytoplasmic. The helical transmembrane segment at isoleucine 238–alanine 260 threads the bilayer. The Extracellular portion of the chain corresponds to proline 261 to proline 274. Residues leucine 275–phenylalanine 294 traverse the membrane as a helical segment. The Cytoplasmic segment spans residues glycine 295–valine 337. Phosphoserine is present on serine 320.

It belongs to the G-protein coupled receptor 1 family. Interacts with C3 (the anaphylatoxin peptide C3a and the adipogenic hormone ASP); the interaction occurs with higher affinity for ASP, enhancing the phosphorylation and activation of GPR77, recruitment of ARRB2 to the cell surface and endocytosis of GRP77. Frontal cortex, hippocampus, hypothalamus, pons and liver.

Its subcellular location is the cell membrane. Its function is as follows. Receptor for the chemotactic and inflammatory C3a, C4a and C5a anaphylatoxin peptides and also for their dearginated forms ASP/C3adesArg, C4adesArg and C5adesArg respectively. Couples weakly to G(i)-mediated signaling pathways. The protein is C5a anaphylatoxin chemotactic receptor 2 (C5AR2) of Homo sapiens (Human).